Consider the following 464-residue polypeptide: MAMTAGTTTTFPMSNHTRERVTVAKLTLENFYSNLILQHEERETRQKKLEVAMEEEGLADEEKKLRRSQHARKETEFLRLKRTRLGLDDFESLKVIGRGAFGEVRLVQKKDTGHIYAMKILRKSDMLEKEQVAHIRAERDILVEADGAWVVKMFYSFQDKRNLYLIMEFLPGGDMMTLLMKKDTLTEEETQFYISETVLAIDAIHQLGFIHRDIKPDNLLLDAKGHVKLSDFGLCTGLKKAHRTEFYRNLTHNPPSDFSFQNMNSKRKAETWKKNRRQLAYSTVGTPDYIAPEVFMQTGYNKLCDWWSLGVIMYEMLIGYPPFCSETPQETYRKVMNWKETLVFPPEVPISEKAKDLILRFCIDSENRIGNSGVEEIKGHPFFEGVDWEHIRERPAAIPIEIKSIDDTSNFDDFPESDILQPVPNTTEPDYKSKDWVFLNYTYKRFEGLTQRGSIPTYMKAGKL.

Position 2 is an N-acetylalanine (Ala2). The tract at residues 63–88 (KKLRRSQHARKETEFLRLKRTRLGLD) is S100B binding. The residue at position 75 (Thr75) is a Phosphothreonine. The Protein kinase domain occupies 90 to 383 (FESLKVIGRG…VEEIKGHPFF (294 aa)). Residues 96-104 (IGRGAFGEV) and Lys119 contribute to the ATP site. The active-site Proton acceptor is Asp213. Phosphoserine; by autocatalysis is present on Ser282. One can recognise an AGC-kinase C-terminal domain in the interval 384–453 (EGVDWEHIRE…KRFEGLTQRG (70 aa)). Thr442 bears the Phosphothreonine; by STK24/MST3 mark.

Belongs to the protein kinase superfamily. AGC Ser/Thr protein kinase family. In terms of assembly, homodimeric S100B binds two molecules of STK38L. Interacts with MICAL1; leading to inhibit the protein kinase activity by antagonizing activation by MST1/STK4. Interacts with MOB1 and MOB2. Mg(2+) is required as a cofactor. As to expression, ubiquitously expressed with highest levels observed in the thymus.

Its subcellular location is the cytoplasm. The protein resides in the cytoskeleton. It is found in the membrane. The catalysed reaction is L-seryl-[protein] + ATP = O-phospho-L-seryl-[protein] + ADP + H(+). It catalyses the reaction L-threonyl-[protein] + ATP = O-phospho-L-threonyl-[protein] + ADP + H(+). With respect to regulation, activated by binding of S100B which releases autoinhibitory N-lobe interactions, enabling ATP to bind and the autophosphorylation of Ser-282. Thr-442 then undergoes calcium-dependent phosphorylation by STK24/MST3. Interactions between phosphorylated Thr-442 and the N-lobe promote additional structural changes that complete the activation of the kinase. Autoinhibition is also released by the binding of MOB1/MOBKL1A and MOB2/HCCA2 to the N-terminal of STK38L. Involved in the regulation of structural processes in differentiating and mature neuronal cells. The sequence is that of Serine/threonine-protein kinase 38-like from Homo sapiens (Human).